The sequence spans 121 residues: Protein yippee-like 5 (121 aa).

The Yippee domain maps to 13 to 110; the sequence is RLFSCANCDA…LERALVRESE (98 aa). Residues Cys17, Cys20, Cys73, and Cys76 each contribute to the Zn(2+) site. Position 118 is a phosphoserine (Ser118).

It belongs to the yippee family. In terms of assembly, identified in the CTLH complex that contains GID4, RANBP9 and/or RANBP10, MKLN1, MAEA, RMND5A (or alternatively its paralog RMND5B), GID8, ARMC8, WDR26 and YPEL5. Within this complex, MAEA, RMND5A (or alternatively its paralog RMND5B), GID8, WDR26, and RANBP9 and/or RANBP10 form the catalytic core, while GID4, MKLN1, ARMC8 and YPEL5 have ancillary roles. Interacts with RANBP9 and RANBP10.

The protein resides in the nucleus. It is found in the cytoplasm. It localises to the cytoskeleton. The protein localises to the microtubule organizing center. Its subcellular location is the centrosome. The protein resides in the spindle pole. It is found in the midbody. Component of the CTLH E3 ubiquitin-protein ligase complex that selectively accepts ubiquitin from UBE2H and mediates ubiquitination and subsequent proteasomal degradation of the transcription factor HBP1. Required for normal cell proliferation. This chain is Protein yippee-like 5 (YPEL5), found in Macaca fascicularis (Crab-eating macaque).